The primary structure comprises 494 residues: Maintenance of mitochondrial morphology protein 1 (494 aa).

Residues 1–22 are Lumenal-facing; that stretch reads MSSQPGDPATLPAQSSLSFTQG. The helical transmembrane segment at 23–43 threads the bilayer; sequence FLLGQLSVVLVLAAFIKFFIF. Residues 44–494 are Cytoplasmic-facing; it reads GEAPPPPSRG…GSLPEAVTPG (451 aa). Disordered regions lie at residues 50–98, 274–330, 398–426, and 449–494; these read PSRG…SSST, PPLD…KSNV, VRTG…ARHE, and VASR…VTPG. Residues 54-64 show a composition bias toward basic residues; the sequence is LSHRSATHRRS. Polar residues-rich tracts occupy residues 65 to 76 and 85 to 98; these read NSIYSNSPQEAG and STSN…SSST. The SMP-LTD domain occupies 130–387; the sequence is QPESLDWFNV…EPRVQVVGLP (258 aa). The segment covering 274-286 has biased composition (pro residues); sequence PPLDTPSHSPSPP. Composition is skewed to polar residues over residues 406-416 and 466-477; these read TASNGPRSTVS and RSMTRQESSGDL.

It belongs to the MMM1 family. As to quaternary structure, homodimer. Component of the ER-mitochondria encounter structure (ERMES) or MDM complex, composed of mmm1, mdm10, mdm12 and mdm34. A mmm1 homodimer associates with one molecule of mdm12 on each side in a pairwise head-to-tail manner, and the SMP-LTD domains of mmm1 and mdm12 generate a continuous hydrophobic tunnel for phospholipid trafficking.

It is found in the endoplasmic reticulum membrane. Its function is as follows. Component of the ERMES/MDM complex, which serves as a molecular tether to connect the endoplasmic reticulum (ER) and mitochondria. Components of this complex are involved in the control of mitochondrial shape and protein biogenesis, and function in nonvesicular lipid trafficking between the ER and mitochondria. The mdm12-mmm1 subcomplex functions in the major beta-barrel assembly pathway that is responsible for biogenesis of all outer membrane beta-barrel proteins, and acts in a late step after the SAM complex. The mdm10-mdm12-mmm1 subcomplex further acts in the TOM40-specific pathway after the action of the mdm12-mmm1 complex. Essential for establishing and maintaining the structure of mitochondria and maintenance of mtDNA nucleoids. The polypeptide is Maintenance of mitochondrial morphology protein 1 (Aspergillus clavatus (strain ATCC 1007 / CBS 513.65 / DSM 816 / NCTC 3887 / NRRL 1 / QM 1276 / 107)).